Reading from the N-terminus, the 412-residue chain is Isovaleryl-CoA dehydrogenase, mitochondrial (412 aa).

A mitochondrion-targeting transit peptide spans 1-25 (MHKLFVARSVKSALFRIKNHQKPQF). FAD-binding positions include 154 to 163 (LAMSEPNAGS) and 187 to 189 (WCT). Substrate is bound at residue serine 163. Substrate is bound by residues 209–210 (SK), tyrosine 264, and 271–274 (DLER). Glutamate 273 acts as the Proton acceptor in catalysis. FAD is bound by residues arginine 299, glutamine 310, and 367-371 (QCLGG). 394–395 (AG) is a substrate binding site. Position 396–398 (396–398 (TSE)) interacts with FAD.

It belongs to the acyl-CoA dehydrogenase family. Homotetramer. FAD is required as a cofactor. Expressed in flowers and tubers.

It is found in the mitochondrion. It catalyses the reaction 3-methylbutanoyl-CoA + oxidized [electron-transfer flavoprotein] + H(+) = 3-methylbut-2-enoyl-CoA + reduced [electron-transfer flavoprotein]. It participates in amino-acid degradation; L-leucine degradation; (S)-3-hydroxy-3-methylglutaryl-CoA from 3-isovaleryl-CoA: step 1/3. Functionally, involved in the catabolism of amino acids. Uses isovaleryl-CoA as substrate. Minor activity detected with 2-methylpalmitoyl-CoA or 2-methylbutanoyl-CoA, but no activity with short- and medium-straight chain acyl-CoA esters or with 2-methylhexanoyl-CoA. The protein is Isovaleryl-CoA dehydrogenase, mitochondrial (IVD) of Solanum tuberosum (Potato).